We begin with the raw amino-acid sequence, 101 residues long: Apolipoprotein C-II (101 aa).

The signal sequence occupies residues 1 to 22 (MGTRFLLALFLVLLVLGLEVQA). Residues 66–74 (AVDERIRDM) are lipid binding. The interval 78 to 101 (STAAVTTYAGIFTDQLFSMLKGEQ) is lipoprotein lipase cofactor.

Belongs to the apolipoprotein C2 family. Proapolipoprotein C-II is synthesized as a sialic acid containing glycoprotein which is subsequently desialylated prior to its proteolytic processing. Post-translationally, proapolipoprotein C-II, the major form found in plasma undergoes proteolytic cleavage of its N-terminal hexapeptide to generate apolipoprotein C-II, which occurs as the minor form in plasma.

It is found in the secreted. In terms of biological role, component of chylomicrons, very low-density lipoproteins (VLDL), low-density lipoproteins (LDL), and high-density lipoproteins (HDL) in plasma. Plays an important role in lipoprotein metabolism as an activator of lipoprotein lipase. Both proapolipoprotein C-II and apolipoprotein C-II can activate lipoprotein lipase. The chain is Apolipoprotein C-II (APOC2) from Tupaia glis (Common tree shrew).